Reading from the N-terminus, the 458-residue chain is Methylenetetrahydrofolate--tRNA-(uracil-5-)-methyltransferase TrmFO (458 aa).

An FAD-binding site is contributed by 12 to 17 (GAGLAG).

The protein belongs to the MnmG family. TrmFO subfamily. It depends on FAD as a cofactor.

It is found in the cytoplasm. It catalyses the reaction uridine(54) in tRNA + (6R)-5,10-methylene-5,6,7,8-tetrahydrofolate + NADH + H(+) = 5-methyluridine(54) in tRNA + (6S)-5,6,7,8-tetrahydrofolate + NAD(+). The catalysed reaction is uridine(54) in tRNA + (6R)-5,10-methylene-5,6,7,8-tetrahydrofolate + NADPH + H(+) = 5-methyluridine(54) in tRNA + (6S)-5,6,7,8-tetrahydrofolate + NADP(+). Catalyzes the folate-dependent formation of 5-methyl-uridine at position 54 (M-5-U54) in all tRNAs. The chain is Methylenetetrahydrofolate--tRNA-(uracil-5-)-methyltransferase TrmFO from Deinococcus geothermalis (strain DSM 11300 / CIP 105573 / AG-3a).